A 514-amino-acid polypeptide reads, in one-letter code: Bifunctional purine biosynthesis protein PurH (514 aa).

One can recognise an MGS-like domain in the interval 1 to 145; sequence MIKRALISVS…KNYQDVVVIV (145 aa).

It belongs to the PurH family.

It catalyses the reaction (6R)-10-formyltetrahydrofolate + 5-amino-1-(5-phospho-beta-D-ribosyl)imidazole-4-carboxamide = 5-formamido-1-(5-phospho-D-ribosyl)imidazole-4-carboxamide + (6S)-5,6,7,8-tetrahydrofolate. It carries out the reaction IMP + H2O = 5-formamido-1-(5-phospho-D-ribosyl)imidazole-4-carboxamide. It functions in the pathway purine metabolism; IMP biosynthesis via de novo pathway; 5-formamido-1-(5-phospho-D-ribosyl)imidazole-4-carboxamide from 5-amino-1-(5-phospho-D-ribosyl)imidazole-4-carboxamide (10-formyl THF route): step 1/1. The protein operates within purine metabolism; IMP biosynthesis via de novo pathway; IMP from 5-formamido-1-(5-phospho-D-ribosyl)imidazole-4-carboxamide: step 1/1. The chain is Bifunctional purine biosynthesis protein PurH from Acetivibrio thermocellus (strain ATCC 27405 / DSM 1237 / JCM 9322 / NBRC 103400 / NCIMB 10682 / NRRL B-4536 / VPI 7372) (Clostridium thermocellum).